A 338-amino-acid polypeptide reads, in one-letter code: Phenylalanine--tRNA ligase alpha subunit (338 aa).

E253 contributes to the Mg(2+) binding site.

It belongs to the class-II aminoacyl-tRNA synthetase family. Phe-tRNA synthetase alpha subunit type 1 subfamily. Tetramer of two alpha and two beta subunits. Requires Mg(2+) as cofactor.

It is found in the cytoplasm. It catalyses the reaction tRNA(Phe) + L-phenylalanine + ATP = L-phenylalanyl-tRNA(Phe) + AMP + diphosphate + H(+). The chain is Phenylalanine--tRNA ligase alpha subunit from Trichlorobacter lovleyi (strain ATCC BAA-1151 / DSM 17278 / SZ) (Geobacter lovleyi).